The chain runs to 701 residues: Pre-mRNA-splicing factor CLF1 (701 aa).

HAT repeat units follow at residues 43–75 (SYQQ…WEIE), 78–110 (HDFP…LELS), 112–144 (KNIN…TEEM), 146–177 (KNYP…FEAR), 179–210 (EEKE…YEME), 214–253 (DDVN…SWTS), 266–299 (EIFK…FEKN), 309–341 (SVLI…LLQN), 343–378 (SNKS…FWIW), 388–424 (NNPV…FELR), 545–576 (MQYD…FESS), and 601–642 (SQIE…VNGS).

This sequence belongs to the crooked-neck family. Associated with the spliceosome.

It is found in the nucleus. Functionally, involved in pre-mRNA splicing and cell cycle progression. Required for the spliceosome assembly and initiation of the DNA replication. The polypeptide is Pre-mRNA-splicing factor CLF1 (CLF1) (Candida albicans (strain SC5314 / ATCC MYA-2876) (Yeast)).